A 302-amino-acid chain; its full sequence is Sodium/potassium-transporting ATPase subunit beta-233 (302 aa).

Residues 1–30 are Cytoplasmic-facing; the sequence is MSGNKDSDGGWKTFIWNSEKKELLGRTGCS. The chain crosses the membrane as a helical; Signal-anchor for type II membrane protein span at residues 31–51; that stretch reads WFKILLFYVIFYGCLAAVFVG. Residues 52–302 are Extracellular-facing; the sequence is TIQALLLTLS…FDIKITVNDS (251 aa). Cystine bridges form between C125–C148 and C158–C174. N193 and N263 each carry an N-linked (GlcNAc...) asparagine glycan. C213 and C274 form a disulfide bridge.

This sequence belongs to the X(+)/potassium ATPases subunit beta family. The sodium/potassium-transporting ATPase is composed of a catalytic alpha subunit, an auxiliary non-catalytic beta subunit and an additional regulatory subunit. In terms of processing, glycosylated. As to expression, expressed mainly in epithelial tissues.

Its subcellular location is the cell membrane. This is the non-catalytic component of the active enzyme, which catalyzes the hydrolysis of ATP coupled with the exchange of Na(+) and K(+) ions across the plasma membrane. The beta subunit regulates, through assembly of alpha/beta heterodimers, the number of sodium pumps transported to the plasma membrane. The polypeptide is Sodium/potassium-transporting ATPase subunit beta-233 (Anguilla anguilla (European freshwater eel)).